The chain runs to 54 residues: Large ribosomal subunit protein bL33 (54 aa).

Belongs to the bacterial ribosomal protein bL33 family.

The protein is Large ribosomal subunit protein bL33 of Stenotrophomonas maltophilia (strain K279a).